A 333-amino-acid polypeptide reads, in one-letter code: Small GTPase-like protein LIP2 (333 aa).

The interval 11-288 is small GTPase-like; the sequence is NKEHMVAPLC…YKYNTLPQHN (278 aa). Residues 29–36, 90–94, and 160–163 each bind GTP; these read GDSGVGKS, DVSGH, and NKAD. Over residues 242–253 the composition is skewed to polar residues; the sequence is SPSSAWSLSHAP. Positions 242 to 265 are disordered; that stretch reads SPSSAWSLSHAPSQRLDEGTSDED.

The protein belongs to the small GTPase superfamily.

This Arabidopsis thaliana (Mouse-ear cress) protein is Small GTPase-like protein LIP2.